Here is a 707-residue protein sequence, read N- to C-terminus: Anaerobic ribonucleoside-triphosphate reductase (707 aa).

The ATP-cone domain occupies Phe4–Arg95. Residues Lys584–Leu707 form the Glycine radical domain. Zn(2+) contacts are provided by Cys645, Cys648, Cys663, and Cys666. At Gly682 the chain carries Glycine radical.

This sequence belongs to the anaerobic ribonucleoside-triphosphate reductase family. In terms of assembly, forms a tetramer composed of two NrdD and two NrdG subunits.

It catalyses the reaction a ribonucleoside 5'-triphosphate + formate + H(+) = a 2'-deoxyribonucleoside 5'-triphosphate + CO2 + H2O. With respect to regulation, activated under anaerobic conditions by NrdG, a tightly associated activase. Activation involves the formation of a glycyl radical at Gly-682. Catalyzes the conversion of ribonucleotides into deoxyribonucleotides, which are required for DNA synthesis and repair. This is Anaerobic ribonucleoside-triphosphate reductase (nrdD) from Haemophilus influenzae (strain ATCC 51907 / DSM 11121 / KW20 / Rd).